Reading from the N-terminus, the 951-residue chain is Spliceosome associated factor 3, U4/U6 recycling protein (951 aa).

The tract at residues 1–58 (MAATGNEEQTLLPDIEEEAEGMEREMESEDDEEEGMGVEHSEEEDEEDTSEDERENEA) is disordered. A compositionally biased stretch (acidic residues) spans 14–56 (DIEEEAEGMEREMESEDDEEEGMGVEHSEEEDEEDTSEDEREN). HAT repeat units lie at residues 88-120 (GKLH…DEIR), 126-157 (SDRE…YSIG), 163-199 (GGIE…FEIV), 222-255 (AQLE…WADD), 304-336 (GDPA…YLDR), 339-371 (KIKD…ALER), 374-410 (ADHQ…YLRR), and 467-500 (KNMQ…LERS). A necessary and sufficient for U6 snRNA binding region spans residues 517–941 (CTSDYPEHVC…LDTQTKSLSN (425 aa)). A coiled-coil region spans residues 533–593 (ERVEGSLEDW…VKADKKAQKK (61 aa)). The span at 567–581 (EALHARQEEEKAEQR) shows a compositional bias: basic and acidic residues. The disordered stretch occupies residues 567–686 (EALHARQEEE…HDMPKEQRKD (120 aa)). A compositionally biased stretch (basic residues) spans 582–596 (RKVKADKKAQKKGQK). Over residues 608–619 (DDDEEEWGEEAE) the composition is skewed to acidic residues. Over residues 674-686 (RQPHDMPKEQRKD) the composition is skewed to basic and acidic residues. RRM domains follow at residues 688 to 766 (NCVF…PCVD) and 785 to 862 (HKIF…ISNP). The interval 905–938 (RQSTPDAKAENGTISAPHATVTDGETSLDTQTKS) is disordered. Positions 927–938 (DGETSLDTQTKS) are enriched in polar residues.

The protein resides in the nucleus. It localises to the nucleoplasm. It is found in the cajal body. Its subcellular location is the nucleus speckle. The protein localises to the cytoplasm. U6 snRNP-binding protein that functions as a recycling factor of the splicing machinery. Promotes the initial reassembly of U4 and U6 snRNPs following their ejection from the spliceosome during its maturation. May also function as a substrate targeting factor for deubiquitinases and mediate the deubiquitination of components of the spliceosome and histones. The polypeptide is Spliceosome associated factor 3, U4/U6 recycling protein (Danio rerio (Zebrafish)).